Consider the following 382-residue polypeptide: Galactokinase (382 aa).

34–37 (EHTD) is a binding site for substrate. 124-130 (GAGLSSS) serves as a coordination point for ATP. Mg(2+)-binding residues include serine 130 and glutamate 162. Aspartate 174 (proton acceptor) is an active-site residue. Position 223 (tyrosine 223) interacts with substrate.

Belongs to the GHMP kinase family. GalK subfamily.

It localises to the cytoplasm. It catalyses the reaction alpha-D-galactose + ATP = alpha-D-galactose 1-phosphate + ADP + H(+). Its pathway is carbohydrate metabolism; galactose metabolism. Functionally, catalyzes the transfer of the gamma-phosphate of ATP to D-galactose to form alpha-D-galactose-1-phosphate (Gal-1-P). The polypeptide is Galactokinase (Escherichia coli (strain SMS-3-5 / SECEC)).